We begin with the raw amino-acid sequence, 188 residues long: Elongation factor P (188 aa).

It belongs to the elongation factor P family.

It is found in the cytoplasm. It participates in protein biosynthesis; polypeptide chain elongation. Functionally, involved in peptide bond synthesis. Stimulates efficient translation and peptide-bond synthesis on native or reconstituted 70S ribosomes in vitro. Probably functions indirectly by altering the affinity of the ribosome for aminoacyl-tRNA, thus increasing their reactivity as acceptors for peptidyl transferase. The protein is Elongation factor P of Wolbachia pipientis subsp. Culex pipiens (strain wPip).